A 156-amino-acid polypeptide reads, in one-letter code: Protein-export protein SecB (156 aa).

It belongs to the SecB family. In terms of assembly, homotetramer, a dimer of dimers. One homotetramer interacts with 1 SecA dimer.

It localises to the cytoplasm. One of the proteins required for the normal export of preproteins out of the cell cytoplasm. It is a molecular chaperone that binds to a subset of precursor proteins, maintaining them in a translocation-competent state. It also specifically binds to its receptor SecA. This is Protein-export protein SecB from Paraburkholderia phymatum (strain DSM 17167 / CIP 108236 / LMG 21445 / STM815) (Burkholderia phymatum).